A 182-amino-acid polypeptide reads, in one-letter code: Interferon beta (182 aa).

An N-terminal signal peptide occupies residues 1-21; the sequence is MNNRWILHAAFLLCFSTTALS. Tyr-24 bears the Phosphotyrosine mark. Residues Asn-50, Asn-90, and Asn-97 are each glycosylated (N-linked (GlcNAc...) asparagine).

It belongs to the alpha/beta interferon family. As to quaternary structure, monomer. This beta interferon does not have a disulfide bond.

The protein resides in the secreted. Functionally, type I interferon cytokine that plays a key role in the innate immune response to infection, developing tumors and other inflammatory stimuli. Signals via binding to high-affinity (IFNAR2) and low-affinity (IFNAR1) heterodimeric receptor, activating the canonical Jak-STAT signaling pathway resulting in transcriptional activation or repression of interferon-regulated genes that encode the effectors of the interferon response, such as antiviral proteins, regulators of cell proliferation and differentiation, and immunoregulatory proteins. Signals mostly via binding to a IFNAR1-IFNAR2 heterodimeric receptor, but can also function with IFNAR1 alone and independently of Jak-STAT pathways. Elicits a wide variety of responses, including antiviral and antibacterial activities, and can regulate the development of B-cells, myelopoiesis and lipopolysaccharide (LPS)-inducible production of tumor necrosis factor. Plays a role in neuronal homeostasis by regulating dopamine turnover and protecting dopaminergic neurons: acts by promoting neuronal autophagy and alpha-synuclein clearance, thereby preventing dopaminergic neuron loss. IFNB1 is more potent than interferon-alpha (IFN-alpha) in inducing the apoptotic and antiproliferative pathways required for control of tumor cell growth. The sequence is that of Interferon beta from Mus musculus (Mouse).